Consider the following 901-residue polypeptide: HTH-type transcriptional regulator MalT (901 aa).

39-46 (SPAGYGKT) contributes to the ATP binding site. Residues 829 to 894 (ELIRTSPLTQ…DAVQHAQQLL (66 aa)) enclose the HTH luxR-type domain. A DNA-binding region (H-T-H motif) is located at residues 853 to 872 (NEQIAGELEVAATTIKTHIR).

This sequence belongs to the MalT family. Monomer in solution. Oligomerizes to an active state in the presence of the positive effectors ATP and maltotriose.

Activated by ATP and maltotriose, which are both required for DNA binding. Positively regulates the transcription of the maltose regulon whose gene products are responsible for uptake and catabolism of malto-oligosaccharides. Specifically binds to the promoter region of its target genes, recognizing a short DNA motif called the MalT box. The chain is HTH-type transcriptional regulator MalT from Escherichia fergusonii (strain ATCC 35469 / DSM 13698 / CCUG 18766 / IAM 14443 / JCM 21226 / LMG 7866 / NBRC 102419 / NCTC 12128 / CDC 0568-73).